The sequence spans 259 residues: uncharacterized protein (259 aa).

Residues 51 to 173 (GKTHAKIVAN…IAVADGTDMT (123 aa)) form the HD domain.

This is an uncharacterized protein from Methanocaldococcus jannaschii (strain ATCC 43067 / DSM 2661 / JAL-1 / JCM 10045 / NBRC 100440) (Methanococcus jannaschii).